Consider the following 522-residue polypeptide: N-acetylgalactosamine-6-sulfatase (522 aa).

A signal peptide spans 1–25 (MAPVAAATGWRLLLVLSAAGLGAAG). Positions 27–379 (PQPPNILLLL…PAMLGGQLTD (353 aa)) are catalytic domain. Residues D38, D39, and C78 each coordinate Ca(2+). C78 acts as the Nucleophile in catalysis. C78 is subject to 3-oxoalanine (Cys). H141 is an active-site residue. A glycan (N-linked (GlcNAc...) asparagine) is linked at N203. Ca(2+) contacts are provided by D288 and N289. Cysteines 308 and 419 form a disulfide. N-linked (GlcNAc...) asparagine glycosylation occurs at N423. 2 cysteine pairs are disulfide-bonded: C489–C518 and C501–C507.

The protein belongs to the sulfatase family. As to quaternary structure, homodimer. It depends on Ca(2+) as a cofactor. In terms of processing, the conversion to 3-oxoalanine (also known as C-formylglycine, FGly), of a serine or cysteine residue in prokaryotes and of a cysteine residue in eukaryotes, is critical for catalytic activity.

It is found in the lysosome. It catalyses the reaction Hydrolysis of the 6-sulfate groups of the N-acetyl-D-galactosamine 6-sulfate units of chondroitin sulfate and of the D-galactose 6-sulfate units of keratan sulfate.. The sequence is that of N-acetylgalactosamine-6-sulfatase (GALNS) from Canis lupus familiaris (Dog).